Reading from the N-terminus, the 35-residue chain is Mu-theraphotoxin-Ca2a (35 aa).

3 disulfide bridges follow: C2-C17, C9-C24, and C16-C31.

This sequence belongs to the neurotoxin 10 (Hwtx-1) family. 10 (haplotoxin-1) subfamily. Expressed by the venom gland.

The protein resides in the secreted. Its function is as follows. Potently inhibits Nav1.7/SCN9A (IC(50)=98.1 nM), and moderately inhibits Nav1.2/SCN2A (IC(50)=216.3 nM), Nav1.6/SCN8A (IC(50)=313.6 nM), and Nav1.3/SCN3A (IC(50)=491.3 nM). Hyperpolarizes the slow inactivation, but does not alter the voltage-dependent activation or fast inactivation of Nav1.7/SCN9A. Binds with Nav1.7/SCN9A at the extracellular S3-S4 linker of domain II (site 4). In vivo, exhibits dose-dependent analgesic efficacy by reducing pain responses in rodent models of formalin-induced paw licking, hot plate test, and acetic acid-induced writhing. This Cyriopagopus albostriatus (Cambodian tiger tarantula) protein is Mu-theraphotoxin-Ca2a.